The following is a 90-amino-acid chain: Acylphosphatase (90 aa).

The 87-residue stretch at 3-89 (ALKIRVEGIV…EGYEDFTIKY (87 aa)) folds into the Acylphosphatase-like domain. Residues R18 and N36 contribute to the active site.

Belongs to the acylphosphatase family.

It catalyses the reaction an acyl phosphate + H2O = a carboxylate + phosphate + H(+). The protein is Acylphosphatase (acyP) of Thermotoga maritima (strain ATCC 43589 / DSM 3109 / JCM 10099 / NBRC 100826 / MSB8).